The chain runs to 261 residues: Orotidine 5'-phosphate decarboxylase (261 aa).

Substrate-binding positions include aspartate 34, 56-58 (KTH), 88-97 (DRKFADIGNT), tyrosine 214, and arginine 232. Lysine 90 acts as the Proton donor in catalysis.

Belongs to the OMP decarboxylase family.

The enzyme catalyses orotidine 5'-phosphate + H(+) = UMP + CO2. The protein operates within pyrimidine metabolism; UMP biosynthesis via de novo pathway; UMP from orotate: step 2/2. This Kodamaea ohmeri (Yeast) protein is Orotidine 5'-phosphate decarboxylase (URA3).